Reading from the N-terminus, the 154-residue chain is Myoglobin (154 aa).

Positions 2–148 (GLSDGEWQLV…FRNDMAAKYK (147 aa)) constitute a Globin domain. Serine 4 carries the phosphoserine modification. Histidine 65 is a nitrite binding site. Histidine 65 lines the O2 pocket. Position 68 is a phosphothreonine (threonine 68). Histidine 94 is a binding site for heme b.

This sequence belongs to the globin family. As to quaternary structure, monomeric.

It localises to the cytoplasm. The protein localises to the sarcoplasm. It catalyses the reaction Fe(III)-heme b-[protein] + nitric oxide + H2O = Fe(II)-heme b-[protein] + nitrite + 2 H(+). The catalysed reaction is H2O2 + AH2 = A + 2 H2O. Its function is as follows. Monomeric heme protein which primary function is to store oxygen and facilitate its diffusion within muscle tissues. Reversibly binds oxygen through a pentacoordinated heme iron and enables its timely and efficient release as needed during periods of heightened demand. Depending on the oxidative conditions of tissues and cells, and in addition to its ability to bind oxygen, it also has a nitrite reductase activity whereby it regulates the production of bioactive nitric oxide. Under stress conditions, like hypoxia and anoxia, it also protects cells against reactive oxygen species thanks to its pseudoperoxidase activity. This Didelphis virginiana (North American opossum) protein is Myoglobin (MB).